The primary structure comprises 30 residues: GSAIRCGESCLLGKCYTPGCTCDRPICKKN.

Positions 1 to 30 form a cross-link, cyclopeptide (Gly-Asn); the sequence is GSAIRCGESCLLGKCYTPGCTCDRPICKKN. 3 disulfide bridges follow: Cys-6–Cys-20, Cys-10–Cys-22, and Cys-15–Cys-27.

Post-translationally, contains 3 disulfide bonds. This is a cyclic peptide. Expressed in root nodules but not in seed.

Its function is as follows. Probably participates in a plant defense mechanism. Active against Gram-negative bacterium E.coli ATCC 700926 (MIC=0.5 uM) under low-salt conditions. Not active against Gram-positive bacterium S.aureus ATCC 12600 up to a concentration of 100 uM under low-salt conditions. Exhibits immunomodulatory activity but no cytotoxicity in vitro. This is Cliotide T20 from Clitoria ternatea (Butterfly pea).